The sequence spans 342 residues: Isopentenyl-diphosphate delta-isomerase (342 aa).

11-12 (RK) lines the substrate pocket. Residues Ser-68, 69 to 71 (SMT), Ser-99, and Asn-127 each bind FMN. Substrate is bound at residue 99 to 101 (SMR). Mg(2+) is bound at residue Glu-163. FMN contacts are provided by residues Lys-194, Thr-224, and 295–296 (AG).

It belongs to the IPP isomerase type 2 family. Homooctamer. Dimer of tetramers. Requires FMN as cofactor. The cofactor is NADPH. Mg(2+) is required as a cofactor.

It is found in the cytoplasm. It carries out the reaction isopentenyl diphosphate = dimethylallyl diphosphate. Involved in the biosynthesis of isoprenoids. Catalyzes the 1,3-allylic rearrangement of the homoallylic substrate isopentenyl (IPP) to its allylic isomer, dimethylallyl diphosphate (DMAPP). The sequence is that of Isopentenyl-diphosphate delta-isomerase from Rickettsia typhi (strain ATCC VR-144 / Wilmington).